A 315-amino-acid chain; its full sequence is Lipoyl synthase (315 aa).

7 residues coordinate [4Fe-4S] cluster: C63, C68, C74, C89, C93, C96, and S303. The Radical SAM core domain occupies 75–292; it reads FSHGTATFMI…EKKAYDMGFR (218 aa).

This sequence belongs to the radical SAM superfamily. Lipoyl synthase family. It depends on [4Fe-4S] cluster as a cofactor.

The protein resides in the cytoplasm. It carries out the reaction [[Fe-S] cluster scaffold protein carrying a second [4Fe-4S](2+) cluster] + N(6)-octanoyl-L-lysyl-[protein] + 2 oxidized [2Fe-2S]-[ferredoxin] + 2 S-adenosyl-L-methionine + 4 H(+) = [[Fe-S] cluster scaffold protein] + N(6)-[(R)-dihydrolipoyl]-L-lysyl-[protein] + 4 Fe(3+) + 2 hydrogen sulfide + 2 5'-deoxyadenosine + 2 L-methionine + 2 reduced [2Fe-2S]-[ferredoxin]. It functions in the pathway protein modification; protein lipoylation via endogenous pathway; protein N(6)-(lipoyl)lysine from octanoyl-[acyl-carrier-protein]: step 2/2. In terms of biological role, catalyzes the radical-mediated insertion of two sulfur atoms into the C-6 and C-8 positions of the octanoyl moiety bound to the lipoyl domains of lipoate-dependent enzymes, thereby converting the octanoylated domains into lipoylated derivatives. The sequence is that of Lipoyl synthase from Laribacter hongkongensis (strain HLHK9).